We begin with the raw amino-acid sequence, 345 residues long: Arginine N-succinyltransferase (345 aa).

A succinyl-CoA-binding site is contributed by Leu125. Residue His229 is the Proton donor of the active site.

Belongs to the arginine N-succinyltransferase family.

The enzyme catalyses succinyl-CoA + L-arginine = N(2)-succinyl-L-arginine + CoA + H(+). The protein operates within amino-acid degradation; L-arginine degradation via AST pathway; L-glutamate and succinate from L-arginine: step 1/5. In terms of biological role, catalyzes the transfer of succinyl-CoA to arginine to produce N(2)-succinylarginine. The chain is Arginine N-succinyltransferase from Yersinia enterocolitica serotype O:8 / biotype 1B (strain NCTC 13174 / 8081).